Here is a 371-residue protein sequence, read N- to C-terminus: tRNA (guanine(26)-N(2))-dimethyltransferase (371 aa).

The Trm1 methyltransferase domain occupies 1 to 370; it reads MDVSEGGVTV…GGLAEVEAAV (370 aa). Residues arginine 36, arginine 66, aspartate 81, aspartate 107, and alanine 108 each coordinate S-adenosyl-L-methionine. 4 residues coordinate Zn(2+): cysteine 238, cysteine 241, cysteine 258, and cysteine 261.

The protein belongs to the class I-like SAM-binding methyltransferase superfamily. Trm1 family.

It catalyses the reaction guanosine(26) in tRNA + 2 S-adenosyl-L-methionine = N(2)-dimethylguanosine(26) in tRNA + 2 S-adenosyl-L-homocysteine + 2 H(+). Dimethylates a single guanine residue at position 26 of a number of tRNAs using S-adenosyl-L-methionine as donor of the methyl groups. The polypeptide is tRNA (guanine(26)-N(2))-dimethyltransferase (Halobacterium salinarum (strain ATCC 700922 / JCM 11081 / NRC-1) (Halobacterium halobium)).